Consider the following 293-residue polypeptide: 4-diphosphocytidyl-2-C-methyl-D-erythritol kinase (293 aa).

Lys-16 is a catalytic residue. 99–109 (PMGAGLGGGSS) is an ATP binding site. Asp-141 is a catalytic residue.

It belongs to the GHMP kinase family. IspE subfamily.

It catalyses the reaction 4-CDP-2-C-methyl-D-erythritol + ATP = 4-CDP-2-C-methyl-D-erythritol 2-phosphate + ADP + H(+). Its pathway is isoprenoid biosynthesis; isopentenyl diphosphate biosynthesis via DXP pathway; isopentenyl diphosphate from 1-deoxy-D-xylulose 5-phosphate: step 3/6. Its function is as follows. Catalyzes the phosphorylation of the position 2 hydroxy group of 4-diphosphocytidyl-2C-methyl-D-erythritol. The sequence is that of 4-diphosphocytidyl-2-C-methyl-D-erythritol kinase from Burkholderia cenocepacia (strain ATCC BAA-245 / DSM 16553 / LMG 16656 / NCTC 13227 / J2315 / CF5610) (Burkholderia cepacia (strain J2315)).